A 436-amino-acid chain; its full sequence is CaM kinase-like vesicle-associated protein (436 aa).

The Protein kinase domain occupies 24 to 286 (YDLGQIVKSE…AQEAINHEWI (263 aa)). The tract at residues 328-436 (APENQTAAAT…ALDTVEEQSG (109 aa)) is disordered. Residues 333-409 (TAAATAPAAE…QPPAEPVVHV (77 aa)) show a composition bias toward low complexity.

The protein belongs to the protein kinase superfamily. CAMK Ser/Thr protein kinase family. In terms of assembly, interacts with calmodulin, in the presence of calcium. Ca(2+) serves as cofactor.

The protein localises to the cytoplasmic vesicle membrane. In terms of biological role, does not appear to have detectable kinase activity. The chain is CaM kinase-like vesicle-associated protein (camkv) from Danio rerio (Zebrafish).